A 285-amino-acid chain; its full sequence is Retron Ec67 DNA adenine methylase (285 aa).

4 residues coordinate S-adenosyl-L-methionine: tryptophan 7, lysine 11, aspartate 51, and aspartate 179.

This sequence belongs to the N(4)/N(6)-methyltransferase family.

The enzyme catalyses a 2'-deoxyadenosine in DNA + S-adenosyl-L-methionine = an N(6)-methyl-2'-deoxyadenosine in DNA + S-adenosyl-L-homocysteine + H(+). In terms of biological role, an alpha subtype methylase that recognizes the double-stranded sequence 5'-GATC-3' and methylates A-2 on both strands. May play a regulatory role in the functions of the retron. The chain is Retron Ec67 DNA adenine methylase from Escherichia coli.